Reading from the N-terminus, the 143-residue chain is UPF0225 protein Reut_A0143 (143 aa).

Belongs to the UPF0225 family.

The polypeptide is UPF0225 protein Reut_A0143 (Cupriavidus pinatubonensis (strain JMP 134 / LMG 1197) (Cupriavidus necator (strain JMP 134))).